The chain runs to 115 residues: Aspartate 1-decarboxylase (115 aa).

Ser24 functions as the Schiff-base intermediate with substrate; via pyruvic acid in the catalytic mechanism. Ser24 carries the post-translational modification Pyruvic acid (Ser). Thr56 contributes to the substrate binding site. Residue Tyr57 is the Proton donor of the active site. 72 to 74 (GAA) is a substrate binding site.

It belongs to the PanD family. In terms of assembly, heterooctamer of four alpha and four beta subunits. The cofactor is pyruvate. Is synthesized initially as an inactive proenzyme, which is activated by self-cleavage at a specific serine bond to produce a beta-subunit with a hydroxyl group at its C-terminus and an alpha-subunit with a pyruvoyl group at its N-terminus.

It is found in the cytoplasm. It catalyses the reaction L-aspartate + H(+) = beta-alanine + CO2. The protein operates within cofactor biosynthesis; (R)-pantothenate biosynthesis; beta-alanine from L-aspartate: step 1/1. In terms of biological role, catalyzes the pyruvoyl-dependent decarboxylation of aspartate to produce beta-alanine. This chain is Aspartate 1-decarboxylase, found in Pseudothermotoga lettingae (strain ATCC BAA-301 / DSM 14385 / NBRC 107922 / TMO) (Thermotoga lettingae).